Here is a 156-residue protein sequence, read N- to C-terminus: Large ribosomal subunit protein uL30 (156 aa).

This sequence belongs to the universal ribosomal protein uL30 family. In terms of assembly, part of the 50S ribosomal subunit.

This Thermofilum pendens (strain DSM 2475 / Hrk 5) protein is Large ribosomal subunit protein uL30.